The following is a 206-amino-acid chain: Ras-related protein Ral-B (206 aa).

GTP is bound at residue 21–29 (GSGGVGKSA). The Effector region motif lies at 43–51 (YEPTKADSY). GTP is bound by residues 68–72 (DTAGQ), 128–131 (NKSD), and 158–160 (SAK). A compositionally biased stretch (basic and acidic residues) spans 180-189 (KMSENKDKNG). The tract at residues 180–206 (KMSENKDKNGKKSGKNKKSFKERCCLL) is disordered. Cysteine methyl ester is present on Cys-203. The S-geranylgeranyl cysteine moiety is linked to residue Cys-203. The propeptide at 204–206 (CLL) is removed in mature form.

It belongs to the small GTPase superfamily. Ras family. In terms of assembly, interacts with EXOC2/Sec5 and EXOC8/Exo84. Interacts (via effector domain) with RALBP1. Post-translationally, prenylation is essential for membrane localization. The farnesylated form confers resistance to the proapoptotic and anti-anchorage-dependent growth effects of some geranylgeranyltransferase I inhibitors.

It is found in the cell membrane. The protein resides in the midbody. The enzyme catalyses GTP + H2O = GDP + phosphate + H(+). Alternates between an inactive form bound to GDP and an active form bound to GTP. Activated by a guanine nucleotide-exchange factor (GEF) and inactivated by a GTPase-activating protein (GAP). Its function is as follows. Multifunctional GTPase involved in a variety of cellular processes including gene expression, cell migration, cell proliferation, oncogenic transformation and membrane trafficking. Accomplishes its multiple functions by interacting with distinct downstream effectors. Acts as a GTP sensor for GTP-dependent exocytosis of dense core vesicles. Required both to stabilize the assembly of the exocyst complex and to localize functional exocyst complexes to the leading edge of migrating cells. Required for suppression of apoptosis. In late stages of cytokinesis, upon completion of the bridge formation between dividing cells, mediates exocyst recruitment to the midbody to drive abscission. Involved in ligand-dependent receptor mediated endocytosis of the EGF and insulin receptors. In Macaca fascicularis (Crab-eating macaque), this protein is Ras-related protein Ral-B (RALB).